Consider the following 454-residue polypeptide: ADP-specific phosphofructokinase (454 aa).

The ADPK domain maps to 1–452; the sequence is MIDEVRELGI…FLSYLSLLRR (452 aa). Residues Glu-263, Glu-293, and Asp-436 each contribute to the Mg(2+) site. Asp-436 (proton acceptor) is an active-site residue.

Belongs to the carbohydrate kinase PfkC family. Homotetramer. It depends on Mg(2+) as a cofactor.

It is found in the cytoplasm. It carries out the reaction beta-D-fructose 6-phosphate + ADP = beta-D-fructose 1,6-bisphosphate + AMP + H(+). The protein operates within carbohydrate degradation; glycolysis. Inhibited by AMP and ATP. Functionally, catalyzes the phosphorylation of fructose 6-phosphate to fructose 1,6-bisphosphate using ADP as the phosphate donor. As a phosphoryl group donor, ADP can be replaced by GDP, ATP, and GTP to a limited extent. This is ADP-specific phosphofructokinase (pfkC) from Pyrococcus furiosus (strain ATCC 43587 / DSM 3638 / JCM 8422 / Vc1).